The following is a 1169-amino-acid chain: DNA repair protein RAD5 (1169 aa).

Serine 2 is subject to N-acetylserine. A phosphoserine mark is found at serine 20, serine 23, serine 129, and serine 130. A compositionally biased stretch (basic and acidic residues) spans 302-317 (MKRRRTEGGNKREKDN). The interval 302-327 (MKRRRTEGGNKREKDNGNFGRTLTET) is disordered. One can recognise a Helicase ATP-binding domain in the interval 519 to 730 (PILKTMIKGG…YSLVKFLELD (212 aa)). Position 532-539 (532-539 (DEMGLGKT)) interacts with ATP. The DEGH box signature appears at 681 to 684 (DEGH). The RING-type zinc-finger motif lies at 914–961 (CSICTTEPMDLDKALFTECGHSFCEKCLFEYIEFQNSKNLGLKCPNCR). One can recognise a Helicase C-terminal domain in the interval 995–1165 (KITALLKELQ…RRKRRIEEIQ (171 aa)).

Belongs to the SNF2/RAD54 helicase family. As to quaternary structure, homodimer. Interacts with POL30, RAD18, UBC9 and UBC13. Mg(2+) is required as a cofactor. Mn(2+) serves as cofactor. It depends on Ca(2+) as a cofactor.

It is found in the cytoplasm. The protein localises to the nucleus. In terms of biological role, probable helicase, member of the UBC2/RAD6 epistasis group. Functions with the DNA repair protein RAD18 in error-free postreplication DNA repair. Involved in the maintenance of wild-type rates of instability of simple repetitive sequences such as poly(GT) repeats. Seems to be involved in maintaining a balance which acts in favor of error-prone non-homologous joining during DNA double-strand breaks repairs. Recruits the UBC13-MMS2 dimer to chromatin for DNA repair. The sequence is that of DNA repair protein RAD5 (RAD5) from Saccharomyces cerevisiae (strain ATCC 204508 / S288c) (Baker's yeast).